Reading from the N-terminus, the 105-residue chain is MPGAVELDENTINPVSDIAYKDDNGNWRAGPDAKKGYEQGQFIDSDYAEKATSIRRTTNLIKSIQRARDVSEGEARELKDDMVTELEKAETKEERRDIWQKYGSP.

The stretch at 59 to 97 (NLIKSIQRARDVSEGEARELKDDMVTELEKAETKEERRD) forms a coiled coil.

Its subcellular location is the virion. In His1 virus (isolate Australia/Victoria) (His1V), this protein is Structural protein 11.